Consider the following 245-residue polypeptide: Polyhedrin (245 aa).

This sequence belongs to the polyhedrin family.

In terms of biological role, major component of the virus occlusion bodies, which are large proteinaceous structures (polyhedra), that protect the virus from the outside environment for extended periods until they are ingested by insect larvae. This Orgyia pseudotsugata multicapsid polyhedrosis virus (OpMNPV) protein is Polyhedrin (PH).